The primary structure comprises 528 residues: Na(+)/H(+) antiporter NhaB (528 aa).

10 helical membrane-spanning segments follow: residues F28–V50, P67–L87, L98–F118, A140–V160, F240–F260, A305–I325, E350–I370, L391–G411, A449–I469, and M476–E496.

The protein belongs to the NhaB Na(+)/H(+) (TC 2.A.34) antiporter family.

Its subcellular location is the cell inner membrane. It carries out the reaction 2 Na(+)(in) + 3 H(+)(out) = 2 Na(+)(out) + 3 H(+)(in). Its function is as follows. Na(+)/H(+) antiporter that extrudes sodium in exchange for external protons. The sequence is that of Na(+)/H(+) antiporter NhaB from Shewanella frigidimarina (strain NCIMB 400).